The primary structure comprises 376 residues: GDSL esterase/lipase 2 (376 aa).

A signal peptide spans 1 to 25; the sequence is MENSRSTLIIFFAYTTIILIGSINC. A glycan (N-linked (GlcNAc...) asparagine) is linked at Asn36. Catalysis depends on Ser46, which acts as the Nucleophile. N-linked (GlcNAc...) asparagine glycosylation is found at Asn186 and Asn205. Active-site residues include Asp340 and His343. An N-linked (GlcNAc...) asparagine glycan is attached at Asn362.

It belongs to the 'GDSL' lipolytic enzyme family. Expressed seedlings, roots and stems.

It is found in the secreted. Involved in the resistance to the necrotropic bacteria Erwinia carotovora, probably via negative regulation of auxin signaling. Possesses lipase and antimicrobial activities, inhibiting germination of fungal spores (e.g. Alternaria brassicicola). The chain is GDSL esterase/lipase 2 (GLIP2) from Arabidopsis thaliana (Mouse-ear cress).